The chain runs to 61 residues: Small ribosomal subunit protein uS14B (61 aa).

Zn(2+) is bound by residues Cys-24, Cys-27, Cys-40, and Cys-43.

The protein belongs to the universal ribosomal protein uS14 family. Zinc-binding uS14 subfamily. Part of the 30S ribosomal subunit. Contacts proteins S3 and S10. It depends on Zn(2+) as a cofactor.

Its function is as follows. Binds 16S rRNA, required for the assembly of 30S particles and may also be responsible for determining the conformation of the 16S rRNA at the A site. This chain is Small ribosomal subunit protein uS14B, found in Streptomyces avermitilis (strain ATCC 31267 / DSM 46492 / JCM 5070 / NBRC 14893 / NCIMB 12804 / NRRL 8165 / MA-4680).